Here is a 97-residue protein sequence, read N- to C-terminus: Large ribosomal subunit protein uL23 (97 aa).

Belongs to the universal ribosomal protein uL23 family. In terms of assembly, part of the 50S ribosomal subunit. Contacts protein L29, and trigger factor when it is bound to the ribosome.

In terms of biological role, one of the early assembly proteins it binds 23S rRNA. One of the proteins that surrounds the polypeptide exit tunnel on the outside of the ribosome. Forms the main docking site for trigger factor binding to the ribosome. The protein is Large ribosomal subunit protein uL23 of Rhizobium rhizogenes (strain K84 / ATCC BAA-868) (Agrobacterium radiobacter).